A 233-amino-acid polypeptide reads, in one-letter code: Large ribosomal subunit protein uL1 (233 aa).

Belongs to the universal ribosomal protein uL1 family. Part of the 50S ribosomal subunit.

Its function is as follows. Binds directly to 23S rRNA. The L1 stalk is quite mobile in the ribosome, and is involved in E site tRNA release. In terms of biological role, protein L1 is also a translational repressor protein, it controls the translation of the L11 operon by binding to its mRNA. The sequence is that of Large ribosomal subunit protein uL1 from Zymomonas mobilis subsp. mobilis (strain ATCC 31821 / ZM4 / CP4).